Reading from the N-terminus, the 265-residue chain is tRNA pseudouridine synthase A (265 aa).

Asp-52 functions as the Nucleophile in the catalytic mechanism. A substrate-binding site is contributed by Tyr-110. The segment at 244-265 is disordered; sequence FYRDGPPARTPGGTTDAEEDEG.

Belongs to the tRNA pseudouridine synthase TruA family. As to quaternary structure, homodimer.

The enzyme catalyses uridine(38/39/40) in tRNA = pseudouridine(38/39/40) in tRNA. Functionally, formation of pseudouridine at positions 38, 39 and 40 in the anticodon stem and loop of transfer RNAs. In Myxococcus xanthus, this protein is tRNA pseudouridine synthase A.